The chain runs to 700 residues: uncharacterized protein (700 aa).

Residues cysteine 307, cysteine 310, cysteine 314, and cysteine 558 each contribute to the [4Fe-4S] cluster site.

The protein belongs to the AOR/FOR family. The cofactor is [4Fe-4S] cluster. Requires Mo-molybdopterin as cofactor. It depends on tungstopterin as a cofactor.

This is an uncharacterized protein from Escherichia coli (strain K12).